A 309-amino-acid chain; its full sequence is Cilia-and flagella-associated protein 96 (309 aa).

The tract at residues 220–249 (EEKKKTISNTFKPSSPGKKPGGMKAGTFDP) is disordered.

This sequence belongs to the CFAP96 family. In terms of tissue distribution, detected in testis and fetal liver.

It localises to the cytoplasm. It is found in the cytoskeleton. The protein resides in the microtubule organizing center. Its subcellular location is the centrosome. The protein is Cilia-and flagella-associated protein 96 of Homo sapiens (Human).